Reading from the N-terminus, the 116-residue chain is Putative iron-sulfur cluster insertion protein ErpA (116 aa).

Residues cysteine 44, cysteine 108, and cysteine 110 each coordinate iron-sulfur cluster.

This sequence belongs to the HesB/IscA family. As to quaternary structure, homodimer. It depends on iron-sulfur cluster as a cofactor.

Required for insertion of 4Fe-4S clusters. The polypeptide is Putative iron-sulfur cluster insertion protein ErpA (Herminiimonas arsenicoxydans).